Reading from the N-terminus, the 491-residue chain is Glutamyl-tRNA(Gln) amidotransferase subunit A (491 aa).

Catalysis depends on charge relay system residues K79 and S158. Residue S182 is the Acyl-ester intermediate of the active site.

It belongs to the amidase family. GatA subfamily. As to quaternary structure, heterotrimer of A, B and C subunits.

The enzyme catalyses L-glutamyl-tRNA(Gln) + L-glutamine + ATP + H2O = L-glutaminyl-tRNA(Gln) + L-glutamate + ADP + phosphate + H(+). Functionally, allows the formation of correctly charged Gln-tRNA(Gln) through the transamidation of misacylated Glu-tRNA(Gln) in organisms which lack glutaminyl-tRNA synthetase. The reaction takes place in the presence of glutamine and ATP through an activated gamma-phospho-Glu-tRNA(Gln). This Maricaulis maris (strain MCS10) (Caulobacter maris) protein is Glutamyl-tRNA(Gln) amidotransferase subunit A.